A 262-amino-acid chain; its full sequence is Hydroxyethylthiazole kinase (262 aa).

M39 serves as a coordination point for substrate. Residues K115 and T160 each contribute to the ATP site. G187 is a substrate binding site.

This sequence belongs to the Thz kinase family. Mg(2+) serves as cofactor.

The enzyme catalyses 5-(2-hydroxyethyl)-4-methylthiazole + ATP = 4-methyl-5-(2-phosphooxyethyl)-thiazole + ADP + H(+). It participates in cofactor biosynthesis; thiamine diphosphate biosynthesis; 4-methyl-5-(2-phosphoethyl)-thiazole from 5-(2-hydroxyethyl)-4-methylthiazole: step 1/1. In terms of biological role, catalyzes the phosphorylation of the hydroxyl group of 4-methyl-5-beta-hydroxyethylthiazole (THZ). The chain is Hydroxyethylthiazole kinase from Staphylococcus epidermidis (strain ATCC 35984 / DSM 28319 / BCRC 17069 / CCUG 31568 / BM 3577 / RP62A).